A 562-amino-acid polypeptide reads, in one-letter code: Tubby-related protein 2 (562 aa).

The disordered stretch occupies residues M1–D81. A compositionally biased stretch (basic and acidic residues) spans Q35–K46. A phosphoserine mark is found at S152, S153, and S155. Residues L179–C294 form a disordered region. T211 carries the phosphothreonine modification. At S213 the chain carries Phosphoserine. Residues D225–T240 are compositionally biased toward basic and acidic residues. Positions S285–C294 are enriched in polar residues.

The protein belongs to the TUB family. In terms of tissue distribution, expressed in retina and testis.

It is found in the cytoplasm. The protein resides in the secreted. This chain is Tubby-related protein 2 (Tulp2), found in Mus musculus (Mouse).